Consider the following 133-residue polypeptide: Small ribosomal subunit protein uS8 (133 aa).

Belongs to the universal ribosomal protein uS8 family. Part of the 30S ribosomal subunit. Contacts proteins S5 and S12.

One of the primary rRNA binding proteins, it binds directly to 16S rRNA central domain where it helps coordinate assembly of the platform of the 30S subunit. In Prochlorococcus marinus (strain MIT 9313), this protein is Small ribosomal subunit protein uS8.